The sequence spans 247 residues: NAD-dependent protein deacetylase (247 aa).

Residues 1-247 (MDTRKNLKEL…LGGIVEELGY (247 aa)) form the Deacetylase sirtuin-type domain. 8 residues coordinate NAD(+): alanine 23, threonine 27, phenylalanine 34, arginine 35, glutamine 104, isoleucine 106, aspartate 107, and histidine 122. Phenylalanine 34 serves as a coordination point for nicotinamide. 2 residues coordinate nicotinamide: isoleucine 106 and aspartate 107. The active-site Proton acceptor is histidine 122. Cysteine 130, cysteine 133, cysteine 152, and cysteine 155 together coordinate Zn(2+). Threonine 193, serine 194, asparagine 216, and isoleucine 234 together coordinate NAD(+).

Belongs to the sirtuin family. Class U subfamily. Requires Zn(2+) as cofactor.

Its subcellular location is the cytoplasm. The catalysed reaction is N(6)-acetyl-L-lysyl-[protein] + NAD(+) + H2O = 2''-O-acetyl-ADP-D-ribose + nicotinamide + L-lysyl-[protein]. Its function is as follows. NAD-dependent protein deacetylase which modulates the activities of several enzymes which are inactive in their acetylated form. This chain is NAD-dependent protein deacetylase, found in Clostridium tetani (strain Massachusetts / E88).